A 357-amino-acid polypeptide reads, in one-letter code: 3-dehydroquinate synthase (357 aa).

Residues 104–108 (GVVGD), 128–129 (TT), Lys-141, and 168–171 (FLET) contribute to the NAD(+) site. 3 residues coordinate Zn(2+): Glu-183, His-243, and His-260.

The protein belongs to the sugar phosphate cyclases superfamily. Dehydroquinate synthase family. The cofactor is Co(2+). Zn(2+) serves as cofactor. NAD(+) is required as a cofactor.

It is found in the cytoplasm. It catalyses the reaction 7-phospho-2-dehydro-3-deoxy-D-arabino-heptonate = 3-dehydroquinate + phosphate. The protein operates within metabolic intermediate biosynthesis; chorismate biosynthesis; chorismate from D-erythrose 4-phosphate and phosphoenolpyruvate: step 2/7. Its function is as follows. Catalyzes the conversion of 3-deoxy-D-arabino-heptulosonate 7-phosphate (DAHP) to dehydroquinate (DHQ). The protein is 3-dehydroquinate synthase of Streptococcus pyogenes serotype M5 (strain Manfredo).